Consider the following 94-residue polypeptide: Large ribosomal subunit protein uL23 (94 aa).

This sequence belongs to the universal ribosomal protein uL23 family. In terms of assembly, part of the 50S ribosomal subunit. Contacts protein L29, and trigger factor when it is bound to the ribosome.

Functionally, one of the early assembly proteins it binds 23S rRNA. One of the proteins that surrounds the polypeptide exit tunnel on the outside of the ribosome. Forms the main docking site for trigger factor binding to the ribosome. This Symbiobacterium thermophilum (strain DSM 24528 / JCM 14929 / IAM 14863 / T) protein is Large ribosomal subunit protein uL23.